Consider the following 78-residue polypeptide: uncharacterized protein (78 aa).

An N-terminal signal peptide occupies residues 1 to 45; that stretch reads MPVIAIIAIVIIVIILNKTGVSDSLTALTLATVAALLTGGGAAGA.

This sequence to E.coli YkfL.

This is an uncharacterized protein from Escherichia coli (strain K12).